Reading from the N-terminus, the 361-residue chain is Nicotinate-nucleotide--dimethylbenzimidazole phosphoribosyltransferase (361 aa).

Glu-320 serves as the catalytic Proton acceptor.

The protein belongs to the CobT family. As to quaternary structure, homodimer.

The enzyme catalyses 5,6-dimethylbenzimidazole + nicotinate beta-D-ribonucleotide = alpha-ribazole 5'-phosphate + nicotinate + H(+). Its pathway is nucleoside biosynthesis; alpha-ribazole biosynthesis; alpha-ribazole from 5,6-dimethylbenzimidazole: step 1/2. Catalyzes the synthesis of alpha-ribazole-5'-phosphate from nicotinate mononucleotide (NAMN) and 5,6-dimethylbenzimidazole (DMB). The chain is Nicotinate-nucleotide--dimethylbenzimidazole phosphoribosyltransferase from Shigella boydii serotype 18 (strain CDC 3083-94 / BS512).